A 948-amino-acid polypeptide reads, in one-letter code: Valine--tRNA ligase (948 aa).

The 'HIGH' region motif lies at 40 to 50 (PNVTGSLHMGH). The 'KMSKS' region signature appears at 551–555 (KMSKS). Residue Lys554 coordinates ATP. Residues 879–945 (LIDKGAELAR…GKLAEQHARI (67 aa)) are a coiled coil.

It belongs to the class-I aminoacyl-tRNA synthetase family. ValS type 1 subfamily. Monomer.

It is found in the cytoplasm. The enzyme catalyses tRNA(Val) + L-valine + ATP = L-valyl-tRNA(Val) + AMP + diphosphate. Functionally, catalyzes the attachment of valine to tRNA(Val). As ValRS can inadvertently accommodate and process structurally similar amino acids such as threonine, to avoid such errors, it has a 'posttransfer' editing activity that hydrolyzes mischarged Thr-tRNA(Val) in a tRNA-dependent manner. The chain is Valine--tRNA ligase from Pseudomonas syringae pv. syringae (strain B728a).